Reading from the N-terminus, the 215-residue chain is Glutathione S-transferase D4 (215 aa).

The 80-residue stretch at 1 to 80 folds into the GST N-terminal domain; the sequence is MDFYYSPRSS…YLVEKYGKDD (80 aa). Residues serine 9, 50 to 52, and 64 to 66 each bind glutathione; these read HTI and ESR. The region spanning 86–207 is the GST C-terminal domain; it reads DPQKRALINQ…KGLLQMKTMY (122 aa).

Belongs to the GST superfamily. Delta family. Homodimer.

It catalyses the reaction RX + glutathione = an S-substituted glutathione + a halide anion + H(+). Functionally, conjugation of reduced glutathione to a wide number of exogenous and endogenous hydrophobic electrophiles. May be involved in detoxification. The protein is Glutathione S-transferase D4 of Drosophila melanogaster (Fruit fly).